The chain runs to 197 residues: CASP-like protein 1B2 (197 aa).

The residue at position 2 (Ala-2) is an N-acetylalanine. At 2–17 (AREKIVVAGGTTKSWK) the chain is on the cytoplasmic side. Residues 18–38 (LLLGLRIFAFMATLAAAIVMS) traverse the membrane as a helical segment. Residues 39 to 69 (LNKETKTLVVATIGTVPIKATLTAKFQHTPA) lie on the Extracellular side of the membrane. A helical transmembrane segment spans residues 70 to 90 (FVFFVIANVMVSFHNLLMIVV). The Cytoplasmic segment spans residues 91 to 106 (QIFSRKLEYKGLRLLS). The chain crosses the membrane as a helical span at residues 107-127 (IAILDMLNATLVSAAANAAVF). Residues 128-156 (VAELGKNGNKHAKWNKVCDRFTTYCDHGA) lie on the Extracellular side of the membrane. A helical transmembrane segment spans residues 157–177 (GAIIAAFAGVILMLLVSAVSI). Residues 178–197 (SRLLINSKNFSTTATTTSVV) are Cytoplasmic-facing.

The protein belongs to the Casparian strip membrane proteins (CASP) family. Homodimer and heterodimers.

The protein localises to the cell membrane. The chain is CASP-like protein 1B2 from Arabidopsis thaliana (Mouse-ear cress).